Consider the following 205-residue polypeptide: Pyridoxal 5'-phosphate synthase subunit PdxT (205 aa).

Gly54 to Ser56 contacts L-glutamine. Cys86 (nucleophile) is an active-site residue. Residues Arg118 and Ile147–Arg148 contribute to the L-glutamine site. Residues His183 and Glu185 each act as charge relay system in the active site.

It belongs to the glutaminase PdxT/SNO family. As to quaternary structure, in the presence of PdxS, forms a dodecamer of heterodimers. Only shows activity in the heterodimer.

It catalyses the reaction aldehydo-D-ribose 5-phosphate + D-glyceraldehyde 3-phosphate + L-glutamine = pyridoxal 5'-phosphate + L-glutamate + phosphate + 3 H2O + H(+). It carries out the reaction L-glutamine + H2O = L-glutamate + NH4(+). It functions in the pathway cofactor biosynthesis; pyridoxal 5'-phosphate biosynthesis. Catalyzes the hydrolysis of glutamine to glutamate and ammonia as part of the biosynthesis of pyridoxal 5'-phosphate. The resulting ammonia molecule is channeled to the active site of PdxS. This is Pyridoxal 5'-phosphate synthase subunit PdxT from Nitrosopumilus maritimus (strain SCM1).